Here is a 185-residue protein sequence, read N- to C-terminus: Large ribosomal subunit protein uL16m (185 aa).

This sequence belongs to the universal ribosomal protein uL16 family.

The protein localises to the mitochondrion. The chain is Large ribosomal subunit protein uL16m (RPL16) from Oryza sativa subsp. japonica (Rice).